We begin with the raw amino-acid sequence, 33 residues long: Dolabellanin-B2 (33 aa).

In terms of processing, contains two disulfide bonds. Up to two of the methionines may be oxidized to methionine sulfoxides.

It is found in the secreted. Functionally, has antibacterial activity against Gram-negative bacteria E.coli JM109 and DH5-alpha, H.influenza IID 983, and V.vulnificus RIMD 2219009. Has antibacterial activity against Gram-positive bacteria S.aureus IID 1677, B.subtilis RIMD 0225014 and L.monocytogenes VIU206. Possesses antifungal activity against S.cerevisiae A581A, S.pombe IFO 1628, C.albicans ATCC 36232 and TIMM-1623, and C.tropicalis TIMM-0313. This Dolabella auricularia (Shoulderblade sea cat) protein is Dolabellanin-B2.